Consider the following 499-residue polypeptide: Lysine--tRNA ligase (499 aa).

Mg(2+) is bound by residues Glu-408 and Glu-415.

Belongs to the class-II aminoacyl-tRNA synthetase family. Homodimer. It depends on Mg(2+) as a cofactor.

The protein resides in the cytoplasm. It catalyses the reaction tRNA(Lys) + L-lysine + ATP = L-lysyl-tRNA(Lys) + AMP + diphosphate. The polypeptide is Lysine--tRNA ligase (Bacillus thuringiensis (strain Al Hakam)).